Consider the following 345-residue polypeptide: Phosphate acyltransferase (345 aa).

Belongs to the PlsX family. Homodimer. Probably interacts with PlsY.

It is found in the cytoplasm. It carries out the reaction a fatty acyl-[ACP] + phosphate = an acyl phosphate + holo-[ACP]. The protein operates within lipid metabolism; phospholipid metabolism. Its function is as follows. Catalyzes the reversible formation of acyl-phosphate (acyl-PO(4)) from acyl-[acyl-carrier-protein] (acyl-ACP). This enzyme utilizes acyl-ACP as fatty acyl donor, but not acyl-CoA. This chain is Phosphate acyltransferase, found in Wolbachia sp. subsp. Brugia malayi (strain TRS).